A 220-amino-acid chain; its full sequence is MKTGIITMLFVLYLPVTAFATTLRLSNDIDLLVLDGKKVSSSLLRGADSIELDNGPHQLVFRVEKTIRLSSHEERLYISPPLVISFNTQLISQVNFHLPHLETEREAAHFSTTPRLELLDGDAMPIPVKLDILAITSTAKIIDYETETERYNKADKRASLPQFATMMADDSTLLSGISELDAVPPQSQALTEQRLKYWFKQADPQTRNNFLQWAEKQPPS.

The signal sequence occupies residues 1 to 20; sequence MKTGIITMLFVLYLPVTAFA.

The protein belongs to the UPF0319 family.

The protein is UPF0319 protein CKO_02102 of Citrobacter koseri (strain ATCC BAA-895 / CDC 4225-83 / SGSC4696).